A 141-amino-acid polypeptide reads, in one-letter code: MAKKLIGTLKLQVPAGKANPSPPVGPALGQRGINIMEFCKAFNAKTADMEVGAPCPTVISYYQDKSFTMDIKTPPASYFLKKAAKIQSGANKPSRETAGTVTVAQIREIAEAKMKDLNANDIDGAMQIILGSARSMGIEVK.

The protein belongs to the universal ribosomal protein uL11 family. Part of the ribosomal stalk of the 50S ribosomal subunit. Interacts with L10 and the large rRNA to form the base of the stalk. L10 forms an elongated spine to which L12 dimers bind in a sequential fashion forming a multimeric L10(L12)X complex. In terms of processing, one or more lysine residues are methylated.

Forms part of the ribosomal stalk which helps the ribosome interact with GTP-bound translation factors. This Ruegeria pomeroyi (strain ATCC 700808 / DSM 15171 / DSS-3) (Silicibacter pomeroyi) protein is Large ribosomal subunit protein uL11.